A 340-amino-acid chain; its full sequence is Ferredoxin--NADP reductase (340 aa).

Asp33, Gln41, Tyr46, Ala86, Phe120, Asp286, and Thr327 together coordinate FAD.

It belongs to the ferredoxin--NADP reductase type 2 family. Homodimer. FAD serves as cofactor.

The enzyme catalyses 2 reduced [2Fe-2S]-[ferredoxin] + NADP(+) + H(+) = 2 oxidized [2Fe-2S]-[ferredoxin] + NADPH. The protein is Ferredoxin--NADP reductase of Rickettsia conorii (strain ATCC VR-613 / Malish 7).